Reading from the N-terminus, the 431-residue chain is Polygalacturonase ADPG1 (431 aa).

An N-terminal signal peptide occupies residues 1-23 (MARCCRHLAVFLCVLLMLSLCKA). PbH1 repeat units follow at residues 223 to 249 (CNKVEVSNVEITAPGDSPNTDGIHITN) and 250 to 271 (TQNIRVSNSDIGTGDDCISIED). Residue Asp-264 is the Proton donor of the active site. Residue His-287 is part of the active site. PbH1 repeat units lie at residues 303–324 (VSGINVDGAKFSESDNGVRIKT), 332–353 (AKNIKFQNIRMENVKNPIIIDQ), and 398–420 (CQGIVLENVKIKGGTASCKNANV).

The protein belongs to the glycosyl hydrolase 28 family. As to expression, expressed in flower buds and siliques, in the dehiscence zone of anthers (stomium cells) and maturing siliques. Expressed in stigma during pollen tube growth. Not expressed in seeds or in the floral part or leaf abscission zone but found at the junction between the seed and the funiculus at the site of seed abscission.

The protein resides in the secreted. Its subcellular location is the cell wall. The protein localises to the cytoplasm. It carries out the reaction (1,4-alpha-D-galacturonosyl)n+m + H2O = (1,4-alpha-D-galacturonosyl)n + (1,4-alpha-D-galacturonosyl)m.. Polygalacturonase involved in cell separation in the final stages of pod shatter and in anther dehiscence. Not involved in floral organ abscission. This is Polygalacturonase ADPG1 (ADPG1) from Arabidopsis thaliana (Mouse-ear cress).